The chain runs to 401 residues: Succinyl-diaminopimelate desuccinylase (401 aa).

His-82 contributes to the Zn(2+) binding site. The active site involves Asp-84. Residue Asp-115 participates in Zn(2+) binding. Glu-149 serves as the catalytic Proton acceptor. Zn(2+) contacts are provided by Glu-150, Glu-178, and His-364.

Belongs to the peptidase M20A family. DapE subfamily. Homodimer. Requires Zn(2+) as cofactor. The cofactor is Co(2+).

It carries out the reaction N-succinyl-(2S,6S)-2,6-diaminopimelate + H2O = (2S,6S)-2,6-diaminopimelate + succinate. The protein operates within amino-acid biosynthesis; L-lysine biosynthesis via DAP pathway; LL-2,6-diaminopimelate from (S)-tetrahydrodipicolinate (succinylase route): step 3/3. In terms of biological role, catalyzes the hydrolysis of N-succinyl-L,L-diaminopimelic acid (SDAP), forming succinate and LL-2,6-diaminopimelate (DAP), an intermediate involved in the bacterial biosynthesis of lysine and meso-diaminopimelic acid, an essential component of bacterial cell walls. This chain is Succinyl-diaminopimelate desuccinylase, found in Verminephrobacter eiseniae (strain EF01-2).